The chain runs to 378 residues: Signal peptide peptidase (378 aa).

The segment at 1–27 (MDSAVSDPHNGSAEAGTPANGTTRPPS) is disordered. Over 1 to 31 (MDSAVSDPHNGSAEAGTPANGTTRPPSTPEG) the chain is Lumenal. Residues Asn-10 and Asn-20 are each glycosylated (N-linked (GlcNAc...) asparagine). Residues 32 to 52 (IALAYGSLLLMALLPIFFGAL) traverse the membrane as a helical segment. Topologically, residues 53 to 77 (RSVRCARGKSSSDMPETITSRDAAR) are cytoplasmic. The helical transmembrane segment at 78–98 (FPIIASCTLLGLYLFFKIFSQ) threads the bilayer. Residues 99 to 100 (EY) lie on the Lumenal side of the membrane. Residues 101 to 121 (INLLLSMYFFVLGILALSHTI) traverse the membrane as a helical segment. Residues 122–157 (SPFMNKFFPANFPNRQYQLLFTQGSGENKEEIINYE) lie on the Cytoplasmic side of the membrane. A helical transmembrane segment spans residues 158 to 178 (FDTKDLVCLGLSSVVGVWYLL). Over 179–181 (RKH) the chain is Lumenal. The helical transmembrane segment at 182–202 (WIANNLFGLAFSLNGVELLHL) threads the bilayer. Residues 203 to 209 (NNVSTGC) lie on the Cytoplasmic side of the membrane. Residues 210 to 230 (ILLGGLFIYDIFWVFGTNVMV) traverse the membrane as a helical segment. The active site involves Asp-219. Over 231–256 (TVAKSFEAPIKLVFPQDLLEKGLEAD) the chain is Lumenal. Residues 257-277 (NFAMLGLGDIVIPGIFIALLL) traverse the membrane as a helical segment. Residue Asp-265 is part of the active site. At 278–290 (RFDISLKKNTHTY) the chain is on the cytoplasmic side. Residues 291–311 (FYTSFAAYIFGLGLTIFIMHI) form a helical membrane-spanning segment. At 312-314 (FKH) the chain is on the lumenal side. The helical transmembrane segment at 315–335 (AQPALLYLVPACIGFPVLVAL) threads the bilayer. Positions 317–319 (PAL) match the PAL motif. Over 336–378 (AKGEVAEMFSYEESNPKDPAAETESKEESTEASASKRLEKKEK) the chain is Cytoplasmic. The disordered stretch occupies residues 346 to 378 (YEESNPKDPAAETESKEESTEASASKRLEKKEK). A compositionally biased stretch (basic and acidic residues) spans 349 to 378 (SNPKDPAAETESKEESTEASASKRLEKKEK). Position 368 is a phosphoserine (Ser-368).

The protein belongs to the peptidase A22B family. In terms of assembly, monomer. Homodimer. Interacts with RNF139. Interacts with DERL1 and XBP1 isoform 1. As to expression, widely expressed with highest levels in liver and kidney. In the brain, expressed predominantly in hippocampus, amygdala, piriform cortex, choroid plexus and arcuate nucleus of the hypothalamic area. Isoform 1 is more strongly expressed than isoform 4 in most tissues except brain and skeletal muscle where isoform 4 is the dominant isoform and in testis where isoform 1 and isoform 4 are expressed at similar levels. In the brain, isoform 4 is not detected in the choroid plexus.

The protein resides in the endoplasmic reticulum membrane. It is found in the membrane. The protein localises to the cell membrane. Its function is as follows. Catalyzes intramembrane proteolysis of signal peptides that have been removed from precursors of secretory and membrane proteins, resulting in the release of the fragment from the ER membrane into the cytoplasm. Required to generate lymphocyte cell surface (HLA-E) epitopes derived from MHC class I signal peptides. Involved in the intramembrane cleavage of the integral membrane protein PSEN1. Cleaves the integral membrane protein XBP1 isoform 1 in a DERL1/RNF139-dependent manner. May play a role in graft rejection. This chain is Signal peptide peptidase, found in Mus musculus (Mouse).